The following is a 113-amino-acid chain: Putative anti-sigma factor antagonist TM1081 homolog (113 aa).

The region spanning 1-110 is the STAS domain; it reads MFPYKIVEDV…DTISEALEEV (110 aa). Serine 55 carries the phosphoserine modification.

This sequence belongs to the anti-sigma-factor antagonist family. In terms of processing, phosphorylated on a serine residue.

Its function is as follows. In the phosphorylated form it could act as an anti-anti-sigma factor that counteracts an anti-sigma factor and thus releases a sigma factor from inhibition. The sequence is that of Putative anti-sigma factor antagonist TM1081 homolog from Thermotoga neapolitana.